Here is a 316-residue protein sequence, read N- to C-terminus: Metal cation efflux system protein CzcD (316 aa).

The Cytoplasmic segment spans residues 1–16 (MGAGHSHDHPGGNERS). Residues 17-37 (LKIALALTGTFLIAEVVGGVM) traverse the membrane as a helical segment. At 38–46 (TKSLALISD) the chain is on the periplasmic side. Residues 47-67 (AAHMLTDTVALAIALAAIAIA) traverse the membrane as a helical segment. The Cytoplasmic segment spans residues 68–81 (KRPADKKRTFGYYR). The chain crosses the membrane as a helical span at residues 82 to 102 (FEILAAAFNALLLFGVAIYIL). The Periplasmic portion of the chain corresponds to 103–114 (YEAYLRLKSPPQ). Residues 115–135 (IESTGMFVVAVLGLIINLISM) form a helical membrane-spanning segment. The Cytoplasmic segment spans residues 136-151 (RMLSSGQSSSLNVKGA). Transmembrane regions (helical) follow at residues 152–172 (YLEV…AIII) and 174–194 (FTGW…WVLP). Residues 195 to 316 (RTWILLKSSL…GSKSLAAGGN (122 aa)) lie on the Cytoplasmic side of the membrane.

The protein belongs to the cation diffusion facilitator (CDF) transporter (TC 2.A.4) family. SLC30A subfamily.

The protein resides in the cell inner membrane. Efflux is inhibited by FCCP. In terms of biological role, mediates a low-level metal ion resistance, probably by efflux of cations from the cytoplasm into the periplasm. Also mediates resistance to cobalt, cadmium and zinc via regulation of the Czc system. May repress expression of the Czc system by an export of the inducing cations. Binds and transports zinc. Can also bind cobalt, copper and nickel. The protein is Metal cation efflux system protein CzcD (czcD) of Cupriavidus metallidurans (strain ATCC 43123 / DSM 2839 / NBRC 102507 / CH34) (Ralstonia metallidurans).